The primary structure comprises 269 residues: UPF0162 protein YchA (269 aa).

It belongs to the UPF0162 family.

This chain is UPF0162 protein YchA (ychA), found in Escherichia coli O157:H7.